The following is a 497-amino-acid chain: Probable pyruvate kinase, cytosolic isozyme (497 aa).

Arg-37 serves as a coordination point for substrate. Residues Asn-39, Ser-41, Asp-71, and Thr-72 each contribute to the K(+) site. 39–42 (NFSH) lines the ATP pocket. ATP is bound by residues Arg-78 and Lys-163. Residue Lys-227 participates in substrate binding. Glu-229 contacts Mg(2+). Substrate-binding residues include Gly-252, Asp-253, and Thr-285. Asp-253 is a Mg(2+) binding site.

Belongs to the pyruvate kinase family. As to quaternary structure, homotetramer. Mg(2+) serves as cofactor. It depends on K(+) as a cofactor.

It localises to the cytoplasm. The protein resides in the cytosol. The enzyme catalyses pyruvate + ATP = phosphoenolpyruvate + ADP + H(+). Its pathway is carbohydrate degradation; glycolysis; pyruvate from D-glyceraldehyde 3-phosphate: step 5/5. Key regulatory enzyme of the glycolytic pathway that catalyzes the final step of glycolysis, converting ADP and phosphoenolpyruvate (PEP) to ATP and pyruvate by essentially irreversible transphosphorylation. The chain is Probable pyruvate kinase, cytosolic isozyme from Arabidopsis thaliana (Mouse-ear cress).